The chain runs to 132 residues: MAKEYSRTQRIGDQMQRELAELIRREVKDPRVGLVTITAVDVSRDLGHAKVFITVMGQDGTDAVPQTLKALTSAASFLRLHLGRVMQLRSVPQLHFHFDESVSRGVHLSALIERAVAEDRLHQDAGEPDTKE.

The protein belongs to the RbfA family. In terms of assembly, monomer. Binds 30S ribosomal subunits, but not 50S ribosomal subunits or 70S ribosomes.

It localises to the cytoplasm. In terms of biological role, one of several proteins that assist in the late maturation steps of the functional core of the 30S ribosomal subunit. Associates with free 30S ribosomal subunits (but not with 30S subunits that are part of 70S ribosomes or polysomes). Required for efficient processing of 16S rRNA. May interact with the 5'-terminal helix region of 16S rRNA. The chain is Ribosome-binding factor A from Pseudomonas entomophila (strain L48).